The primary structure comprises 25 residues: Caerin-2.4 (25 aa).

As to expression, expressed by the skin parotoid and/or rostral glands.

The protein resides in the secreted. In terms of biological role, antibacterial peptide, that adopts an alpha helical conformation which can disrupt bacterial membranes. Each caerin displays a different antimicrobial specificity. In Ranoidea caerulea (Green tree frog), this protein is Caerin-2.4.